The primary structure comprises 458 residues: Argininosuccinate lyase (458 aa).

It belongs to the lyase 1 family. Argininosuccinate lyase subfamily.

The protein resides in the cytoplasm. It carries out the reaction 2-(N(omega)-L-arginino)succinate = fumarate + L-arginine. The protein operates within amino-acid biosynthesis; L-arginine biosynthesis; L-arginine from L-ornithine and carbamoyl phosphate: step 3/3. In Haemophilus ducreyi (strain 35000HP / ATCC 700724), this protein is Argininosuccinate lyase.